The primary structure comprises 315 residues: Probable cell division protein WhiA (315 aa).

The segment at residues 277 to 311 (SLQELGAMMPSGQISKSGVNHRLRKLNQIAEGYQQ) is a DNA-binding region (H-T-H motif).

The protein belongs to the WhiA family.

In terms of biological role, involved in cell division and chromosome segregation. This chain is Probable cell division protein WhiA, found in Lacticaseibacillus paracasei (strain ATCC 334 / BCRC 17002 / CCUG 31169 / CIP 107868 / KCTC 3260 / NRRL B-441) (Lactobacillus paracasei).